The primary structure comprises 442 residues: Proline--tRNA ligase (442 aa).

It belongs to the class-II aminoacyl-tRNA synthetase family. ProS type 2 subfamily. In terms of assembly, homodimer.

The protein resides in the cytoplasm. It carries out the reaction tRNA(Pro) + L-proline + ATP = L-prolyl-tRNA(Pro) + AMP + diphosphate. Functionally, catalyzes the attachment of proline to tRNA(Pro) in a two-step reaction: proline is first activated by ATP to form Pro-AMP and then transferred to the acceptor end of tRNA(Pro). The polypeptide is Proline--tRNA ligase (Rhizobium meliloti (strain 1021) (Ensifer meliloti)).